The following is a 266-amino-acid chain: UPF0294 protein YafD (266 aa).

Belongs to the UPF0294 family.

The protein resides in the cytoplasm. This chain is UPF0294 protein YafD, found in Salmonella paratyphi C (strain RKS4594).